A 196-amino-acid chain; its full sequence is MASKEAELEALLYAAGDDGLETENLLQLLEISPAALRELANHLKDRLKNDENSGLQLICINQTYKLTTSPKCGDIISKFFQKDLSKNLSQSALEILSIIAYRQPITRVEIDDLRGVNSAGALQTLVWRGLIKVDGKKDVPGHPNLYVTTDYFLQYFNYESLADLPVIEEFEADDNPVNLFNQDDSRNKEINFDEGE.

It belongs to the ScpB family. As to quaternary structure, homodimer. Homodimerization may be required to stabilize the binding of ScpA to the Smc head domains. Component of a cohesin-like complex composed of ScpA, ScpB and the Smc homodimer, in which ScpA and ScpB bind to the head domain of Smc. The presence of the three proteins is required for the association of the complex with DNA.

It localises to the cytoplasm. Participates in chromosomal partition during cell division. May act via the formation of a condensin-like complex containing Smc and ScpA that pull DNA away from mid-cell into both cell halves. In Lactobacillus johnsonii (strain CNCM I-12250 / La1 / NCC 533), this protein is Segregation and condensation protein B.